A 396-amino-acid polypeptide reads, in one-letter code: Tryptophan synthase beta chain (396 aa).

At lysine 88 the chain carries N6-(pyridoxal phosphate)lysine.

Belongs to the TrpB family. As to quaternary structure, tetramer of two alpha and two beta chains. It depends on pyridoxal 5'-phosphate as a cofactor.

The catalysed reaction is (1S,2R)-1-C-(indol-3-yl)glycerol 3-phosphate + L-serine = D-glyceraldehyde 3-phosphate + L-tryptophan + H2O. It functions in the pathway amino-acid biosynthesis; L-tryptophan biosynthesis; L-tryptophan from chorismate: step 5/5. In terms of biological role, the beta subunit is responsible for the synthesis of L-tryptophan from indole and L-serine. The polypeptide is Tryptophan synthase beta chain (Actinobacillus pleuropneumoniae serotype 5b (strain L20)).